Reading from the N-terminus, the 193-residue chain is Potassium-transporting ATPase KdpC subunit (193 aa).

The helical transmembrane segment at 10 to 30 threads the bilayer; the sequence is AAIIIFSVLTGVIYPALVTVI.

The protein belongs to the KdpC family. As to quaternary structure, the system is composed of three essential subunits: KdpA, KdpB and KdpC.

The protein localises to the cell membrane. Functionally, part of the high-affinity ATP-driven potassium transport (or Kdp) system, which catalyzes the hydrolysis of ATP coupled with the electrogenic transport of potassium into the cytoplasm. This subunit acts as a catalytic chaperone that increases the ATP-binding affinity of the ATP-hydrolyzing subunit KdpB by the formation of a transient KdpB/KdpC/ATP ternary complex. This chain is Potassium-transporting ATPase KdpC subunit, found in Herpetosiphon aurantiacus (strain ATCC 23779 / DSM 785 / 114-95).